Here is a 92-residue protein sequence, read N- to C-terminus: Small ribosomal subunit protein uS19 (92 aa).

It belongs to the universal ribosomal protein uS19 family.

Its function is as follows. Protein S19 forms a complex with S13 that binds strongly to the 16S ribosomal RNA. The polypeptide is Small ribosomal subunit protein uS19 (Albidiferax ferrireducens (strain ATCC BAA-621 / DSM 15236 / T118) (Rhodoferax ferrireducens)).